Consider the following 24-residue polypeptide: M-poneritoxin-Ng1e (24 aa).

In terms of tissue distribution, expressed by the venom gland.

It is found in the secreted. Its subcellular location is the target cell membrane. Has a broad spectrum of activity against both Gram-positive and Gram-negative bacteria and S.cerevisiae. Has insecticidal and hemolytic activities. May act by disrupting the integrity of the bacterial cell membrane. The protein is M-poneritoxin-Ng1e of Neoponera goeldii (Ponerine ant).